The following is a 198-amino-acid chain: FMN-dependent NADH:quinone oxidoreductase (198 aa).

96-99 (MYNF) is an FMN binding site.

It belongs to the azoreductase type 1 family. Homodimer. FMN is required as a cofactor.

It carries out the reaction 2 a quinone + NADH + H(+) = 2 a 1,4-benzosemiquinone + NAD(+). The enzyme catalyses N,N-dimethyl-1,4-phenylenediamine + anthranilate + 2 NAD(+) = 2-(4-dimethylaminophenyl)diazenylbenzoate + 2 NADH + 2 H(+). Quinone reductase that provides resistance to thiol-specific stress caused by electrophilic quinones. In terms of biological role, also exhibits azoreductase activity. Catalyzes the reductive cleavage of the azo bond in aromatic azo compounds to the corresponding amines. In Burkholderia thailandensis (strain ATCC 700388 / DSM 13276 / CCUG 48851 / CIP 106301 / E264), this protein is FMN-dependent NADH:quinone oxidoreductase.